A 334-amino-acid polypeptide reads, in one-letter code: HTH-type transcriptional repressor PurR (334 aa).

In terms of domain architecture, HTH lacI-type spans 2–56; the sequence is ATIKDVARLAGVSTTTVSHVINKTRFVAEATQEKVNKAVDELNYAPSAVARSLKC. The segment at residues 4 to 23 is a DNA-binding region (H-T-H motif); sequence IKDVARLAGVSTTTVSHVIN. The DNA-binding element occupies 48–56; that stretch reads SAVARSLKC. Phe-73, Lys-189, Phe-220, and Asp-274 together coordinate hypoxanthine.

In terms of assembly, homodimer.

The protein operates within purine metabolism; purine nucleotide biosynthesis [regulation]. Is the main repressor of the genes involved in the de novo synthesis of purine nucleotides, regulating purB, purC, purEK, purF, purHD, purL, purMN and guaBA expression. PurR is allosterically activated to bind its cognate DNA by binding the purine corepressors, hypoxanthine or guanine, thereby effecting transcription repression. The polypeptide is HTH-type transcriptional repressor PurR (Vibrio atlanticus (strain LGP32) (Vibrio splendidus (strain Mel32))).